We begin with the raw amino-acid sequence, 185 residues long: MALDKLLEHEAQAEIERIRAEARDRAQQILASARERADALLESRRRLLETQRQAALVRARSAADLELSAARLTASEQGMAEVYRLVEGHLREITGLPEYREILARLIAEARQAIPEAEAVEVNPADLALARELVTDLSVRENPAIQGGVRVVARGGKSGITNTLAGRLDRLRGELAPQVSRLLAE.

The protein belongs to the V-ATPase E subunit family.

Functionally, produces ATP from ADP in the presence of a proton gradient across the membrane. This is V-type ATP synthase subunit E from Deinococcus geothermalis (strain DSM 11300 / CIP 105573 / AG-3a).